The primary structure comprises 371 residues: Ubiquitin receptor RAD23b (371 aa).

A Ubiquitin-like domain is found at 1-79 (MKLTVKTLKG…LVVMLSKSKS (79 aa)). Low complexity predominate over residues 79 to 117 (SGGSAGQASVQTSSVSQPVSATTSSTKPAAPSTTQSSPV). A disordered region spans residues 79 to 142 (SGGSAGQASV…DTYGQAASTL (64 aa)). Residues 128–142 (PAAQTDTYGQAASTL) are compositionally biased toward polar residues. The 44-residue stretch at 146–189 (SSLEQMVQQIMEMGGGSWDKETVTRALRAAYNNPERAVDYLYSG) folds into the UBA 1 domain. Residues 242–285 (GTLEFLRNNDQFQQLRTMVHSNPQILQPMLQELGKQNPQLLRLI) form the STI1 domain. A UBA 2 domain is found at 325–365 (PAEQEAIQRLEAMGFDRALVIEAFLACDRNEELAANYLLEN).

This sequence belongs to the RAD23 family. In terms of assembly, interacts with 'Lys-48'-linked polyubiquitin chains. Interacts with RPN10 via its ubiquitin-like domain. Interacts with UBQ1, UBQ2, UBQ5, UBQ7, UBQ10, UBQ11 and IAA16. Binds to RAD4. Widely expressed in the whole plant.

It localises to the nucleus. The protein resides in the cytoplasm. May be involved in nucleotide excision repair. Binds and presumably selects ubiquitin-conjugates for destruction. Prefers multiubiquitin chains rather than single ubiquitins, with a binding affinity for 'Lys-48'-linked ubiquitin chains. Acts as a ubiquitin receptor that associates with the 26S proteasomal docking subunit RPN10 for the indirect recognition of ubiquitinated substrates of ubiquitin/26S proteasome-mediated proteolysis (UPP). Involved in UV tolerance in both roots and hypocotyls, specifically in dark conditions. The protein is Ubiquitin receptor RAD23b of Arabidopsis thaliana (Mouse-ear cress).